Consider the following 461-residue polypeptide: Cysteine--tRNA ligase (461 aa).

Cys-29 is a Zn(2+) binding site. The 'HIGH' region motif lies at 31–41 (MTVYDFCHIGH). Zn(2+) contacts are provided by Cys-210, His-235, and Glu-239. The short motif at 267–271 (KMSKS) is the 'KMSKS' region element. Position 270 (Lys-270) interacts with ATP.

Belongs to the class-I aminoacyl-tRNA synthetase family. In terms of assembly, monomer. The cofactor is Zn(2+).

It localises to the cytoplasm. The enzyme catalyses tRNA(Cys) + L-cysteine + ATP = L-cysteinyl-tRNA(Cys) + AMP + diphosphate. The protein is Cysteine--tRNA ligase of Azotobacter vinelandii (strain DJ / ATCC BAA-1303).